Reading from the N-terminus, the 445-residue chain is Alpha/beta hydrolase psoB (445 aa).

Catalysis depends on S246, which acts as the Nucleophile.

Belongs to the AB hydrolase superfamily. FUS2 hydrolase family. As to quaternary structure, homodimer.

It functions in the pathway secondary metabolite biosynthesis. Its function is as follows. Alpha/beta hydrolase; part of the gene cluster that mediates the biosynthesis of pseurotin A, a competitive inhibitor of chitin synthase and an inducer of nerve-cell proliferation. The PKS-NRPS hybrid synthetase psoA is responsible for the biosynthesis of azaspirene, one of the first intermediates having the 1-oxa-7-azaspiro[4,4]-non-2-ene-4,6-dione core of pseurotin, via condensation of one acetyl-CoA, 4 malonyl-CoA, and a L-phenylalanine molecule. The dual-functional monooxygenase/methyltransferase psoF seems to be involved in the addition of the C3 methyl group onto the pseurotin scaffold. Azaspirene is then converted to synerazol through 4 steps including oxidation of C17 by the cytochrome P450 monooxygenase psoD, O-methylation of the hydroxy group of C8 by the methyltransferase psoC, and the trans-to-cis isomerization of the C13 olefin by the glutathione S-transferase psoE. The fourth step of synerazol production is performed by the dual-functional monooxygenase/methyltransferase psoF which seems to catalyze the epoxidation of the intermediate deepoxy-synerazol. Synerazol can be attacked by a water molecule nonenzymatically at two different positions to yield two diol products, pseurotin A and pseurotin D. The chain is Alpha/beta hydrolase psoB from Aspergillus fumigatus (strain ATCC MYA-4609 / CBS 101355 / FGSC A1100 / Af293) (Neosartorya fumigata).